The chain runs to 645 residues: Phosphomethylpyrimidine synthase (645 aa).

The segment covering Met-1 to Ile-12 has biased composition (polar residues). The interval Met-1–Gln-25 is disordered. Substrate-binding positions include Asn-253, Met-282, Tyr-311, His-347, Ser-367–Gly-369, Asp-408–Arg-411, and Glu-447. His-451 is a Zn(2+) binding site. Tyr-474 provides a ligand contact to substrate. A Zn(2+)-binding site is contributed by His-515. [4Fe-4S] cluster is bound by residues Cys-595, Cys-598, and Cys-603.

This sequence belongs to the ThiC family. Homodimer. The cofactor is [4Fe-4S] cluster.

It carries out the reaction 5-amino-1-(5-phospho-beta-D-ribosyl)imidazole + S-adenosyl-L-methionine = 4-amino-2-methyl-5-(phosphooxymethyl)pyrimidine + CO + 5'-deoxyadenosine + formate + L-methionine + 3 H(+). It functions in the pathway cofactor biosynthesis; thiamine diphosphate biosynthesis. Functionally, catalyzes the synthesis of the hydroxymethylpyrimidine phosphate (HMP-P) moiety of thiamine from aminoimidazole ribotide (AIR) in a radical S-adenosyl-L-methionine (SAM)-dependent reaction. The sequence is that of Phosphomethylpyrimidine synthase from Photorhabdus laumondii subsp. laumondii (strain DSM 15139 / CIP 105565 / TT01) (Photorhabdus luminescens subsp. laumondii).